Consider the following 210-residue polypeptide: Thiamine-phosphate synthase 2 (210 aa).

4-amino-2-methyl-5-(diphosphooxymethyl)pyrimidine contacts are provided by residues 38–42 (QLREK) and Asp-70. Residues Asp-71 and Glu-90 each coordinate Mg(2+). Thr-109 provides a ligand contact to 4-amino-2-methyl-5-(diphosphooxymethyl)pyrimidine. 135–137 (TTT) provides a ligand contact to 2-[(2R,5Z)-2-carboxy-4-methylthiazol-5(2H)-ylidene]ethyl phosphate. 4-amino-2-methyl-5-(diphosphooxymethyl)pyrimidine is bound at residue Lys-138. Gly-165 contacts 2-[(2R,5Z)-2-carboxy-4-methylthiazol-5(2H)-ylidene]ethyl phosphate.

This sequence belongs to the thiamine-phosphate synthase family. It depends on Mg(2+) as a cofactor.

The catalysed reaction is 2-[(2R,5Z)-2-carboxy-4-methylthiazol-5(2H)-ylidene]ethyl phosphate + 4-amino-2-methyl-5-(diphosphooxymethyl)pyrimidine + 2 H(+) = thiamine phosphate + CO2 + diphosphate. The enzyme catalyses 2-(2-carboxy-4-methylthiazol-5-yl)ethyl phosphate + 4-amino-2-methyl-5-(diphosphooxymethyl)pyrimidine + 2 H(+) = thiamine phosphate + CO2 + diphosphate. It carries out the reaction 4-methyl-5-(2-phosphooxyethyl)-thiazole + 4-amino-2-methyl-5-(diphosphooxymethyl)pyrimidine + H(+) = thiamine phosphate + diphosphate. The protein operates within cofactor biosynthesis; thiamine diphosphate biosynthesis; thiamine phosphate from 4-amino-2-methyl-5-diphosphomethylpyrimidine and 4-methyl-5-(2-phosphoethyl)-thiazole: step 1/1. In terms of biological role, condenses 4-methyl-5-(beta-hydroxyethyl)thiazole monophosphate (THZ-P) and 2-methyl-4-amino-5-hydroxymethyl pyrimidine pyrophosphate (HMP-PP) to form thiamine monophosphate (TMP). This is Thiamine-phosphate synthase 2 from Streptococcus pneumoniae serotype 4 (strain ATCC BAA-334 / TIGR4).